The primary structure comprises 300 residues: tRNA dimethylallyltransferase 1 (300 aa).

Residue 10–17 participates in ATP binding; the sequence is GPTGVGKT. 12–17 is a substrate binding site; the sequence is TGVGKT. An interaction with substrate tRNA region spans residues 35–38; it reads DSRQ.

The protein belongs to the IPP transferase family. Monomer. Mg(2+) is required as a cofactor.

The enzyme catalyses adenosine(37) in tRNA + dimethylallyl diphosphate = N(6)-dimethylallyladenosine(37) in tRNA + diphosphate. Functionally, catalyzes the transfer of a dimethylallyl group onto the adenine at position 37 in tRNAs that read codons beginning with uridine, leading to the formation of N6-(dimethylallyl)adenosine (i(6)A). This is tRNA dimethylallyltransferase 1 from Phocaeicola vulgatus (strain ATCC 8482 / DSM 1447 / JCM 5826 / CCUG 4940 / NBRC 14291 / NCTC 11154) (Bacteroides vulgatus).